The chain runs to 1171 residues: DNA-directed RNA polymerase subunit beta' (1171 aa).

Residues cysteine 60, cysteine 62, cysteine 75, and cysteine 78 each coordinate Zn(2+). The disordered stretch occupies residues 299–319 (GRRGKPVTGPGNRPLKSLSDM). Aspartate 449, aspartate 451, and aspartate 453 together coordinate Mg(2+). Zn(2+) is bound by residues cysteine 790, cysteine 864, cysteine 871, and cysteine 874.

It belongs to the RNA polymerase beta' chain family. In terms of assembly, the RNAP catalytic core consists of 2 alpha, 1 beta, 1 beta' and 1 omega subunit. When a sigma factor is associated with the core the holoenzyme is formed, which can initiate transcription. Mg(2+) is required as a cofactor. Zn(2+) serves as cofactor.

The catalysed reaction is RNA(n) + a ribonucleoside 5'-triphosphate = RNA(n+1) + diphosphate. Functionally, DNA-dependent RNA polymerase catalyzes the transcription of DNA into RNA using the four ribonucleoside triphosphates as substrates. The sequence is that of DNA-directed RNA polymerase subunit beta' from Alkaliphilus metalliredigens (strain QYMF).